Consider the following 142-residue polypeptide: Interleukin-3 (142 aa).

The first 18 residues, 1–18, serve as a signal peptide directing secretion; it reads MSHLPILLLLLLVSPGLQ. Asn33, Asn88, and Asn108 each carry an N-linked (GlcNAc...) asparagine glycan. A disulfide bridge links Cys34 with Cys102.

It belongs to the IL-3 family. Monomer. As to expression, activated T-cells, mast cells, natural killer cells.

The protein resides in the secreted. In terms of biological role, granulocyte/macrophage colony-stimulating factors are cytokines that act in hematopoiesis by controlling the production, differentiation, and function of 2 related white cell populations of the blood, the granulocytes and the monocytes-macrophages. Its function is as follows. This CSF induces granulocytes, macrophages, mast cells, stem cells, erythroid cells, eosinophils and megakaryocytes. This Saguinus oedipus (Cotton-top tamarin) protein is Interleukin-3 (IL3).